The chain runs to 74 residues: Lambda-hexatoxin-Hv1e (74 aa).

Residues 1-22 form the signal peptide; sequence MNTATCFIVLLVVATVIGGIEA. The propeptide occupies 23-35; sequence GEFDMRKDVMGLF. Cystine bridges form between C40–C54, C47–C59, C50–C51, and C53–C69.

Belongs to the neurotoxin 11 (kappa toxin) family. As to expression, expressed by the venom gland.

It localises to the secreted. In terms of biological role, this excitatory toxin inhibits insect calcium-activated potassium (KCa) channels (Slo-type). The polypeptide is Lambda-hexatoxin-Hv1e (Hadronyche versuta (Blue mountains funnel-web spider)).